A 193-amino-acid polypeptide reads, in one-letter code: ATP-dependent Clp protease proteolytic subunit 1 (193 aa).

The Nucleophile role is filled by Ser99. His124 is an active-site residue.

It belongs to the peptidase S14 family. As to quaternary structure, fourteen ClpP subunits assemble into 2 heptameric rings which stack back to back to give a disk-like structure with a central cavity, resembling the structure of eukaryotic proteasomes.

It localises to the cytoplasm. It carries out the reaction Hydrolysis of proteins to small peptides in the presence of ATP and magnesium. alpha-casein is the usual test substrate. In the absence of ATP, only oligopeptides shorter than five residues are hydrolyzed (such as succinyl-Leu-Tyr-|-NHMec, and Leu-Tyr-Leu-|-Tyr-Trp, in which cleavage of the -Tyr-|-Leu- and -Tyr-|-Trp bonds also occurs).. In terms of biological role, cleaves peptides in various proteins in a process that requires ATP hydrolysis. Has a chymotrypsin-like activity. Plays a major role in the degradation of misfolded proteins. The sequence is that of ATP-dependent Clp protease proteolytic subunit 1 from Shouchella clausii (strain KSM-K16) (Alkalihalobacillus clausii).